We begin with the raw amino-acid sequence, 458 residues long: MEFIHQPYYPGETIAAIATPPGEGGVAIIRISGDQSLEVAAKIFSGPIFSYRSHTAHYGQIYNSSGEHVDDVLVLIMLGKRSYTGENTVEIHCHGGSLITRKVLEVVLAAGARAALPGEFTFKAYMNGKIDLAQAEAVQELICAKNEKALGAAESQLKGSLSNRVLAFQSTLTQIAAILEAWVDFPEEGLEFATMDELDQDLERTAKDMEKLVNSFHNGKILHDGLSICLIGCPNVGKSSLMNALLDKDRAIVSPIPGTTRDVLEDHLRLNGLHIKLSDTAGIREANESVEQEGIRRSKKAMQEADLILLVLDAHKGLEKEDQELLKQVPFHKTIVIWNKIDLNPRNLPCLEVPFLVHLSAKEKIGLEELHQTIDTIIWQDGPPSKEEILITNVRHKEALIESIESLRRVKIGLRHQVSPEFLTLDMRQSLLELGKIIGTNISEDILSAIFSKFCIGK.

The (6S)-5-formyl-5,6,7,8-tetrahydrofolate site is built by Arg30, Glu90, and Lys129. The region spanning 225–379 (GLSICLIGCP…LHQTIDTIIW (155 aa)) is the TrmE-type G domain. Asn235 contributes to the K(+) binding site. Residues 235–240 (NVGKSS), 254–260 (SPIPGTT), and 279–282 (DTAG) contribute to the GTP site. Position 239 (Ser239) interacts with Mg(2+). 3 residues coordinate K(+): Ser254, Ile256, and Thr259. Thr260 is a binding site for Mg(2+). (6S)-5-formyl-5,6,7,8-tetrahydrofolate is bound at residue Lys458.

The protein belongs to the TRAFAC class TrmE-Era-EngA-EngB-Septin-like GTPase superfamily. TrmE GTPase family. In terms of assembly, homodimer. Heterotetramer of two MnmE and two MnmG subunits. The cofactor is K(+).

Its subcellular location is the cytoplasm. Exhibits a very high intrinsic GTPase hydrolysis rate. Involved in the addition of a carboxymethylaminomethyl (cmnm) group at the wobble position (U34) of certain tRNAs, forming tRNA-cmnm(5)s(2)U34. This Protochlamydia amoebophila (strain UWE25) protein is tRNA modification GTPase MnmE.